A 1230-amino-acid chain; its full sequence is Cullin-associated NEDD8-dissociated protein 1 (1230 aa).

Residue A2 is modified to N-acetylalanine. HEAT repeat units follow at residues 2-39, 44-81, 83-119, 131-165, 171-208, 210-247, 248-282, 289-366, 370-407, 424-467, 471-510, and 515-552; these read ASAS…KDSI, DSER…KVKE, QVET…ELPP, CKKI…LSRQ, NFHP…SCGN, VFVG…QAGH, RIGE…FESF, EVYP…TRHE, EFYK…QTRP, PLTM…VLPG, QHIP…NHSP, and PHVQ…VIRP. An N6-acetyllysine modification is found at K55. The tract at residues 315–343 is disordered; it reads DEDEDENAMDADGGDDDDQGSDDEYSDDG. S335 is subject to Phosphoserine. A Phosphoserine modification is found at S558. 15 HEAT repeats span residues 563–602, 606–643, 646–683, 688–725, 729–768, 770–808, 809–845, 852–889, 890–927, 928–960, 961–998, 1002–1039, 1043–1097, 1099–1133, and 1140–1189; these read PYIK…NLGD, SDLP…LKID, PVLG…NYSD, AMID…VYPS, KISG…TGTN, LGYM…ALTR, ACPK…LGEV, SGQL…GNLP, EYLP…GLKP, YVEN…KLTL, IDPE…DHPQ, PLLK…NKPS, DLLD…DSCL, RLDI…LSTL, and QRLD…IPEA. At K971 the chain carries N6-acetyllysine.

The protein belongs to the CAND family. As to quaternary structure, interacts with TBP. Part of a complex that contains CUL1 and RBX1. Interacts with unneddylated cullins: interacts with CUL1, CUL2, CUL3, CUL4A, CUL4B and CUL5. Does not bind neddylated CUL1. Interaction with cullins is abolished in presence of COMMD1, which antagonizes with CAND1 for interacting with cullins. Interacts with ERCC6. Interacts with DCUN1D1, DCUN1D2, DCUN1D3, DCUN1D4 and DCUN1D5; these interactions are bridged by cullins and strongly inhibits the neddylation of cullins.

The protein localises to the cytoplasm. It localises to the nucleus. Key assembly factor of SCF (SKP1-CUL1-F-box protein) E3 ubiquitin ligase complexes that promotes the exchange of the substrate-recognition F-box subunit in SCF complexes, thereby playing a key role in the cellular repertoire of SCF complexes. Acts as a F-box protein exchange factor. The exchange activity of CAND1 is coupled with cycles of neddylation conjugation: in the deneddylated state, cullin-binding CAND1 binds CUL1-RBX1, increasing dissociation of the SCF complex and promoting exchange of the F-box protein. Probably plays a similar role in other cullin-RING E3 ubiquitin ligase complexes. The chain is Cullin-associated NEDD8-dissociated protein 1 (CAND1) from Pongo abelii (Sumatran orangutan).